We begin with the raw amino-acid sequence, 618 residues long: DNA ligase 2 (618 aa).

A compositionally biased stretch (basic and acidic residues) spans 197–208 (DKKTLESREDAK). The disordered stretch occupies residues 197 to 250 (DKKTLESREDAKSVPPASQPEITNKISGDTSPNTSESVQTKKSDPDTSSNVDPS). Positions 216 to 234 (PEITNKISGDTSPNTSESV) are enriched in polar residues. E312 provides a ligand contact to ATP. The N6-AMP-lysine intermediate role is filled by K314. Residues R319, R334, E363, F403, R476, and K482 each coordinate ATP. Residues 459 to 480 (HEGVMLKDPDSTYNPGSRGQHW) are disordered.

It belongs to the ATP-dependent DNA ligase family. Mg(2+) serves as cofactor.

The enzyme catalyses ATP + (deoxyribonucleotide)n-3'-hydroxyl + 5'-phospho-(deoxyribonucleotide)m = (deoxyribonucleotide)n+m + AMP + diphosphate.. Its function is as follows. DNA ligase that seals nicks in double-stranded DNA during DNA replication, DNA recombination and DNA repair. The sequence is that of DNA ligase 2 from Haloquadratum walsbyi (strain DSM 16790 / HBSQ001).